The primary structure comprises 102 residues: Small ribosomal subunit protein bS6 (102 aa).

The protein belongs to the bacterial ribosomal protein bS6 family.

Binds together with bS18 to 16S ribosomal RNA. This chain is Small ribosomal subunit protein bS6, found in Desulfovibrio desulfuricans (strain ATCC 27774 / DSM 6949 / MB).